We begin with the raw amino-acid sequence, 400 residues long: Golgin-45 (400 aa).

Positions 1 to 16 (MTTKNLETKVTVTSSP) are enriched in polar residues. Positions 1-58 (MTTKNLETKVTVTSSPIRGAGDGMETEEPPKSVEVTSGVQSRKHHSLQSPWKKAVPSE) are disordered. The residue at position 15 (Ser-15) is a Phosphoserine. The short motif at 18–22 (RGAGD) is the Tankyrase-binding motif element. Residue Ser-49 is modified to Phosphoserine. A coiled-coil region spans residues 120 to 213 (NKELSEVKNV…QLERMSIQCD (94 aa)). Thr-348 is modified (phosphothreonine). Ser-353 bears the Phosphoserine mark. The segment at 394-400 (RGELIAL) is essential for interaction with GORASP2.

In terms of assembly, interacts with GORASP2. Interacts with the GTP-bound form of RAB2, but not with other Golgi Rab proteins. Identified in a complex with RAB2 and GORASP2. Post-translationally, ADP-ribosylated by tankyrase TNKS and TNKS2. Poly-ADP-ribosylated protein is recognized by RNF146, followed by ubiquitination. In terms of processing, ubiquitinated by RNF146 when poly-ADP-ribosylated, leading to its degradation. Detected in adrenal gland.

Its subcellular location is the golgi apparatus membrane. It is found in the nucleus. The protein localises to the cytoplasm. Required for normal Golgi structure and for protein transport from the endoplasmic reticulum (ER) through the Golgi apparatus to the cell surface. This Homo sapiens (Human) protein is Golgin-45 (BLZF1).